A 226-amino-acid chain; its full sequence is UPF0173 metal-dependent hydrolase GTNG_2675 (226 aa).

It belongs to the UPF0173 family.

This Geobacillus thermodenitrificans (strain NG80-2) protein is UPF0173 metal-dependent hydrolase GTNG_2675.